The chain runs to 234 residues: Gene 53 protein (234 aa).

In Mycobacterium phage L5 (Mycobacteriophage L5), this protein is Gene 53 protein (53).